The sequence spans 90 residues: Probable Fe(2+)-trafficking protein (90 aa).

The protein belongs to the Fe(2+)-trafficking protein family.

Functionally, could be a mediator in iron transactions between iron acquisition and iron-requiring processes, such as synthesis and/or repair of Fe-S clusters in biosynthetic enzymes. The sequence is that of Probable Fe(2+)-trafficking protein from Verminephrobacter eiseniae (strain EF01-2).